The following is a 468-amino-acid chain: Probable cytosol aminopeptidase (468 aa).

Residues K242 and D247 each contribute to the Mn(2+) site. Residue K254 is part of the active site. Mn(2+) is bound by residues D265, D324, and E326. The active site involves R328.

Belongs to the peptidase M17 family. Mn(2+) is required as a cofactor.

Its subcellular location is the cytoplasm. The enzyme catalyses Release of an N-terminal amino acid, Xaa-|-Yaa-, in which Xaa is preferably Leu, but may be other amino acids including Pro although not Arg or Lys, and Yaa may be Pro. Amino acid amides and methyl esters are also readily hydrolyzed, but rates on arylamides are exceedingly low.. It catalyses the reaction Release of an N-terminal amino acid, preferentially leucine, but not glutamic or aspartic acids.. Its function is as follows. Presumably involved in the processing and regular turnover of intracellular proteins. Catalyzes the removal of unsubstituted N-terminal amino acids from various peptides. The chain is Probable cytosol aminopeptidase from Neisseria meningitidis serogroup A / serotype 4A (strain DSM 15465 / Z2491).